Consider the following 105-residue polypeptide: Met repressor (105 aa).

This sequence belongs to the MetJ family. Homodimer.

The protein resides in the cytoplasm. Its function is as follows. This regulatory protein, when combined with SAM (S-adenosylmethionine) represses the expression of the methionine regulon and of enzymes involved in SAM synthesis. The protein is Met repressor of Actinobacillus succinogenes (strain ATCC 55618 / DSM 22257 / CCUG 43843 / 130Z).